Here is a 467-residue protein sequence, read N- to C-terminus: MVKKLTGKSFALSALVAASFVAAGAMASDKTEPRNDVYKDKFSKQYNSWHATAESEAITDALEQDPALVILWAGYGFAKDYNAPRGHMYALTDVRNTLRTGAPTSAEDGPMPMACWSCKSPDVPRLIEEQGESGYFTGKWAKGGAEVANTIGCSDCHEKGTPKLRLSRPFASRAMEAIGTPFDKASKQDKESMVCAQCHVEYYFEKTDDRKGFVKFPWDGGTTVENMEVYYDAIQFADWTHAVSKTPMLKAQHPGYETWKLGTHGQNNVSCVDCHMPKVTNEQGKKFTDHKVGNPFDRFEETCGTCHSQDKEHMLTVYKDNKSKVMELKSKAEAQLVAAHFEAGAAWKAGATEDEMKPILTNIRHAQWRWDYAIASHGVSAHAPAEALRVLGTAVDKAANARVQLAQLLATKGVKQPIELPDISTKAKAQAALGMDMDKMNADKAKFKQEMLPKWEADAKAREATYK.

The first 27 residues, 1 to 27 (MVKKLTGKSFALSALVAASFVAAGAMA), serve as a signal peptide directing secretion. Heme c is bound at residue His-87. Heme contacts are provided by Cys-115, Cys-118, and Lys-119. Heme c contacts are provided by Cys-153, Cys-156, His-157, Cys-195, Cys-198, and His-199. Glu-201, Tyr-202, Lys-250, and Gln-252 together coordinate Ca(2+). Tyr-202 serves as a coordination point for substrate. His-253 serves as a coordination point for substrate. Residues His-264, Cys-271, Cys-274, His-275, His-290, Cys-303, Cys-306, His-307, and His-382 each coordinate heme c.

The protein belongs to the cytochrome c-552 family. The cofactor is Ca(2+). It depends on heme c as a cofactor.

It is found in the periplasm. It carries out the reaction 6 Fe(III)-[cytochrome c] + NH4(+) + 2 H2O = 6 Fe(II)-[cytochrome c] + nitrite + 8 H(+). The protein operates within nitrogen metabolism; nitrate reduction (assimilation). Its function is as follows. Catalyzes the reduction of nitrite to ammonia, consuming six electrons in the process. This Shewanella amazonensis (strain ATCC BAA-1098 / SB2B) protein is Cytochrome c-552.